The primary structure comprises 359 residues: Phospho-N-acetylmuramoyl-pentapeptide-transferase (359 aa).

10 consecutive transmembrane segments (helical) span residues 23 to 43 (VAFFVAFGLSVFFMPYFIKWA), 68 to 88 (MGGIVFIISMICASLLCGNLF), 92 to 112 (VLLGLFCISCFALIGARDDYM), 126 to 146 (MKFFLLFIVSLIITSILLYIG), 165 to 185 (AFKIMDISVLALGFWVLVFLA), 198 to 218 (GLATMPSICALFSLSAFVYVA), 235 to 255 (SGELVILSVALIGALFGFLWY), 262 to 282 (VFMGDSGSLALGAFIAFMAIV), 287 to 307 (ILLLLIGIIFVIEALSVILQV), and 336 to 356 (KIIVRFWIIAILANIIALLSL).

The protein belongs to the glycosyltransferase 4 family. MraY subfamily. It depends on Mg(2+) as a cofactor.

It localises to the cell inner membrane. It catalyses the reaction UDP-N-acetyl-alpha-D-muramoyl-L-alanyl-gamma-D-glutamyl-meso-2,6-diaminopimeloyl-D-alanyl-D-alanine + di-trans,octa-cis-undecaprenyl phosphate = di-trans,octa-cis-undecaprenyl diphospho-N-acetyl-alpha-D-muramoyl-L-alanyl-D-glutamyl-meso-2,6-diaminopimeloyl-D-alanyl-D-alanine + UMP. The protein operates within cell wall biogenesis; peptidoglycan biosynthesis. Functionally, catalyzes the initial step of the lipid cycle reactions in the biosynthesis of the cell wall peptidoglycan: transfers peptidoglycan precursor phospho-MurNAc-pentapeptide from UDP-MurNAc-pentapeptide onto the lipid carrier undecaprenyl phosphate, yielding undecaprenyl-pyrophosphoryl-MurNAc-pentapeptide, known as lipid I. The chain is Phospho-N-acetylmuramoyl-pentapeptide-transferase from Helicobacter hepaticus (strain ATCC 51449 / 3B1).